The following is a 552-amino-acid chain: uncharacterized protein (552 aa).

Residues 8-200 (KLFADMIIQG…LLCVYEGFLK (193 aa)) form the DhaL domain.

This is an uncharacterized protein from Staphylococcus epidermidis (strain ATCC 35984 / DSM 28319 / BCRC 17069 / CCUG 31568 / BM 3577 / RP62A).